A 543-amino-acid polypeptide reads, in one-letter code: Excitatory amino acid transporter 1 (543 aa).

Over 1–47 (MTKSNGEDPRAGSRMERFQQGVRQRTLLAKKKVQNITKDDVKGFLKR) the chain is Cytoplasmic. Residues 48–68 (NGFVLFTVIAVVVGSILGFSV) traverse the membrane as a helical segment. The Extracellular portion of the chain corresponds to 69 to 86 (RSYHMTFRELKYFSFPGE). Residues 87–108 (LLMRMLQMLVLPLIVSSLVTGM) form a helical membrane-spanning segment. At 109–122 (AALDSKASGKMGLR) the chain is on the cytoplasmic side. The chain crosses the membrane as a helical span at residues 123-145 (AVVYYMTTTVIAVFIGIVIVIIV). Topologically, residues 146–237 (HPGKGTKEHM…MREEMIPVPG (92 aa)) are extracellular. N206 and N217 each carry an N-linked (GlcNAc...) asparagine glycan. The helical transmembrane segment at 238-261 (AVNGVNALGLVVFSMCFGLVIGNM) threads the bilayer. The Cytoplasmic segment spans residues 262 to 270 (KEQGKALKD). The helical transmembrane segment at 271-298 (FFDSLNEAIMRLVAVIMWYAPIGILFLI) threads the bilayer. At 299–319 (AGKIAEMEDMGVVGGQLGMYT) the chain is on the extracellular side. Residues 320–341 (VTVIIGLLIHAVIVLPLLYFAV) form a helical membrane-spanning segment. The Cytoplasmic segment spans residues 342–346 (TRKNP). The discontinuously helical intramembrane region spans 347-377 (WVFIGGILQALITALGTSSSSATLPITFKCL). 364-366 (SSS) is an L-aspartate binding site. At 378–386 (EENNKVDKR) the chain is on the cytoplasmic side. Residues 387–413 (VTRFVLPVGATINMDGTALYEALAAIF) traverse the membrane as a helical segment. The Na(+) site is built by G395, T397, and N399. T403 provides a ligand contact to L-aspartate. Residues 414–426 (IAQVNNYDLNFGQ) are Extracellular-facing. The segment at residues 427–460 (ILTISITATAASIGAAGIPQAGLVTMVIVLTSVG) is an intramembrane region (discontinuously helical). 444 to 448 (IPQAG) contributes to the L-aspartate binding site. Topologically, residues 461–473 (LPTDDITLIIAVD) are extracellular. The helical transmembrane segment at 474 to 495 (WFLDRLRTTTNVLGDSLGAGIV) threads the bilayer. Residues D477 and N484 each coordinate L-aspartate. Na(+)-binding residues include N484 and D488. Topologically, residues 496-543 (EHLSRHELQSGDAEMGNSVIEENEMKKPYQLVSQENELEKPIDSETKM) are cytoplasmic. The segment at 521–543 (KKPYQLVSQENELEKPIDSETKM) is disordered. Basic and acidic residues predominate over residues 532–543 (ELEKPIDSETKM).

This sequence belongs to the dicarboxylate/amino acid:cation symporter (DAACS) (TC 2.A.23) family. In terms of assembly, homotrimer. Detected in retina (at protein level).

The protein resides in the cell membrane. The enzyme catalyses K(+)(in) + L-glutamate(out) + 3 Na(+)(out) + H(+)(out) = K(+)(out) + L-glutamate(in) + 3 Na(+)(in) + H(+)(in). It catalyses the reaction K(+)(in) + L-aspartate(out) + 3 Na(+)(out) + H(+)(out) = K(+)(out) + L-aspartate(in) + 3 Na(+)(in) + H(+)(in). It carries out the reaction D-aspartate(out) + K(+)(in) + 3 Na(+)(out) + H(+)(out) = D-aspartate(in) + K(+)(out) + 3 Na(+)(in) + H(+)(in). In terms of biological role, sodium-dependent, high-affinity amino acid transporter that mediates the uptake of L-glutamate and also L-aspartate and D-aspartate. Functions as a symporter that transports one amino acid molecule together with two or three Na(+) ions and one proton, in parallel with the counter-transport of one K(+) ion. Plays a redundant role in the rapid removal of released glutamate from the synaptic cleft, which is essential for terminating the postsynaptic action of glutamate. The protein is Excitatory amino acid transporter 1 (SLC1A3) of Ambystoma tigrinum (Eastern tiger salamander).